The sequence spans 39 residues: Natriuretic peptide NsNP-b (39 aa).

A propeptide spanning residues 1–8 (SGSKTAKI) is cleaved from the precursor. Cys-12 and Cys-28 form a disulfide bridge. The disordered stretch occupies residues 19 to 39 (RIGSTSGMGCGSVPKPTPGGS).

The protein belongs to the natriuretic peptide family. Expressed by the venom gland.

The protein resides in the secreted. Functionally, snake venom natriuretic peptide that targets both NPR1 and NPR2. Exhibits hypotensive and vasodepressor activities. The polypeptide is Natriuretic peptide NsNP-b (Notechis scutatus scutatus (Mainland tiger snake)).